Consider the following 340-residue polypeptide: Probable quinone oxidoreductase (340 aa).

Belongs to the zinc-containing alcohol dehydrogenase family. Quinone oxidoreductase subfamily.

It carries out the reaction 2 a quinone + NADPH + H(+) = 2 a 1,4-benzosemiquinone + NADP(+). This Leishmania amazonensis protein is Probable quinone oxidoreductase.